The sequence spans 507 residues: ATP synthase subunit alpha (507 aa).

169–176 lines the ATP pocket; it reads GDRQTGKT.

This sequence belongs to the ATPase alpha/beta chains family. F-type ATPases have 2 components, CF(1) - the catalytic core - and CF(0) - the membrane proton channel. CF(1) has five subunits: alpha(3), beta(3), gamma(1), delta(1), epsilon(1). CF(0) has three main subunits: a(1), b(2) and c(9-12). The alpha and beta chains form an alternating ring which encloses part of the gamma chain. CF(1) is attached to CF(0) by a central stalk formed by the gamma and epsilon chains, while a peripheral stalk is formed by the delta and b chains.

The protein resides in the cell inner membrane. The enzyme catalyses ATP + H2O + 4 H(+)(in) = ADP + phosphate + 5 H(+)(out). Functionally, produces ATP from ADP in the presence of a proton gradient across the membrane. The alpha chain is a regulatory subunit. This is ATP synthase subunit alpha from Magnetococcus marinus (strain ATCC BAA-1437 / JCM 17883 / MC-1).